Reading from the N-terminus, the 464-residue chain is Cysteine--tRNA ligase (464 aa).

C29 contacts Zn(2+). The short motif at 31–41 (PTVYDFAHIGN) is the 'HIGH' region element. C224, H249, and E253 together coordinate Zn(2+). The 'KMSKS' region signature appears at 282-286 (KMSKS). Residue K285 participates in ATP binding.

The protein belongs to the class-I aminoacyl-tRNA synthetase family. In terms of assembly, monomer. Zn(2+) is required as a cofactor.

The protein localises to the cytoplasm. The catalysed reaction is tRNA(Cys) + L-cysteine + ATP = L-cysteinyl-tRNA(Cys) + AMP + diphosphate. The sequence is that of Cysteine--tRNA ligase from Afipia carboxidovorans (strain ATCC 49405 / DSM 1227 / KCTC 32145 / OM5) (Oligotropha carboxidovorans).